Here is a 338-residue protein sequence, read N- to C-terminus: D-alanine--D-alanine ligase (338 aa).

The ATP-grasp domain occupies K120–K324. An ATP-binding site is contributed by P150–T205. Residues D277, E291, and N293 each coordinate Mg(2+).

The protein belongs to the D-alanine--D-alanine ligase family. The cofactor is Mg(2+). Mn(2+) serves as cofactor.

It is found in the cytoplasm. It catalyses the reaction 2 D-alanine + ATP = D-alanyl-D-alanine + ADP + phosphate + H(+). The protein operates within cell wall biogenesis; peptidoglycan biosynthesis. Functionally, cell wall formation. This is D-alanine--D-alanine ligase from Polaromonas sp. (strain JS666 / ATCC BAA-500).